The chain runs to 1244 residues: Structural polyprotein (1244 aa).

Residues 1–113 (MNSVFYNPFG…GKRQRTALKF (113 aa)) form a disordered region. The segment covering 35-44 (GLTTQIQQLT) has biased composition (polar residues). The interval 35–69 (GLTTQIQQLTRAVRALVLDNATRRQRPAPRTRPRK) is host transcription inhibition. Residues 57–81 (RRQRPAPRTRPRKPKTQKPKPKKQN) are compositionally biased toward basic residues. The short motif at 62–103 (APRTRPRKPKTQKPKPKKQNQKPPQQQKKGKNQPQQPKKPKP) is the Nuclear localization signal element. Over residues 82-97 (QKPPQQQKKGKNQPQQ) the composition is skewed to low complexity. Residues 85-118 (PQQQKKGKNQPQQPKKPKPGKRQRTALKFEADRT) form a binding to the viral RNA region. Positions 99–109 (KKPKPGKRQRT) are enriched in basic residues. The tract at residues 103 to 117 (PGKRQRTALKFEADR) is ribosome-binding. One can recognise a Peptidase S3 domain in the interval 117–267 (RTFVGKNEDG…KTTHEDTVEW (151 aa)). Residue H144 is the Charge relay system of the active site. The short motif at 149 to 159 (IDHPALAKLKF) is the Nuclear export signal element. The interval 160–165 (TKSSSY) is interaction with spike glycoprotein E2. D166 serves as the catalytic Charge relay system. The segment at 188–198 (PEVFYNWHHGA) is dimerization of the capsid protein. S218 (charge relay system) is an active-site residue. The tract at residues 224–228 (DNSGK) is dimerization of the capsid protein. The interval 252–256 (KKGAA) is interaction with spike glycoprotein E2. The interval 268–280 (SRAITAMCILQNV) is functions as an uncleaved signal peptide for the precursor of protein E3/E2. At 268-696 (SRAITAMCIL…HYYHLYPFYT (429 aa)) the chain is on the extracellular side. N279 is a glycosylation site (N-linked (GlcNAc...) asparagine; by host). Disulfide bonds link C284–C290, C481–C595, C530–C555, and C532–C549. N525 carries an N-linked (GlcNAc...) asparagine; by host glycan. The N-linked (GlcNAc...) asparagine; by host glycan is linked to N647. Residues 697–717 (VTVLSGMGLAICAGLVISILC) traverse the membrane as a helical segment. Topologically, residues 718-751 (CCKARRDCLTPYQLAPNATVPFLVTLCCCFQRTS) are cytoplasmic. Positions 720–724 (KARRD) are interaction with the capsid protein. 3 S-palmitoyl cysteine; by host lipidation sites follow: C725, C745, and C746. A disulfide bond links C725 and C746. At 752 to 764 (ADEFTDTMGYLWQ) the chain is on the extracellular side. 2 helical membrane passes run 765–785 (HSQT…ITLV) and 786–805 (RCCS…NKAD). At 806-1218 (AYEHTITVPN…KTSWNWITAL (413 aa)) the chain is on the extracellular side. 4 cysteine pairs are disulfide-bonded: C855/C920, C868/C900, C869/C902, and C874/C884. The E1 fusion peptide loop stretch occupies residues 890–907 (VYPFLWGGAQCFCDSENS). N945 and N1051 each carry an N-linked (GlcNAc...) asparagine; by host glycan. 4 disulfide bridges follow: C1065-C1077, C1106-C1181, C1111-C1185, and C1133-C1175. A helical transmembrane segment spans residues 1219-1239 (MGGISSIAAIAAIVLVIALVF). Over 1240-1244 (TAQHR) the chain is Cytoplasmic.

Homodimer. Homomultimer. Interacts with host karyopherin KPNA4; this interaction allows the nuclear import of the viral capsid protein. Interacts with spike glycoprotein E2. Interacts with host IRAK1; the interaction leads to inhibition of IRAK1-dependent signaling. In terms of assembly, the precursor of protein E3/E2 and E1 form a heterodimer shortly after synthesis. As to quaternary structure, the precursor of protein E3/E2 and E1 form a heterodimer shortly after synthesis. Processing of the precursor of protein E3/E2 into E2 and E3 results in a heterodimer of the spike glycoproteins E2 and E1. Spike at virion surface are constituted of a trimer of E2-E1 heterodimers. After target cell attachment and endocytosis, E1 change conformation to form homotrimers. Interacts with 6K protein. Interacts with spike glycoprotein E1. Processing of the precursor of protein E3/E2 into E2 and E3 results in a heterodimer of the spike glycoproteins E2 and E1. Spike at virion surface are constituted of a trimer of E2-E1 heterodimers. Interacts with 6K protein. In terms of assembly, oligomer. Interacts with spike glycoprotein E1. Interacts with spike glycoprotein E2. Post-translationally, structural polyprotein: Specific enzymatic cleavages in vivo yield mature proteins. Capsid protein is auto-cleaved during polyprotein translation, unmasking a signal peptide at the N-terminus of the precursor of E3/E2. The remaining polyprotein is then targeted to the host endoplasmic reticulum, where host signal peptidase cleaves it into pE2, 6K and E1 proteins. pE2 is further processed to mature E3 and E2 by host furin in trans-Golgi vesicle. Palmitoylated via thioester bonds. These palmitoylations may induce disruption of the C-terminus transmembrane. This would result in the reorientation of E2 C-terminus from lumenal to cytoplasmic side. In terms of processing, N-glycosylated. Post-translationally, palmitoylated via thioester bonds.

The protein localises to the virion. It localises to the host cytoplasm. Its subcellular location is the host cell membrane. It is found in the host nucleus. The protein resides in the virion membrane. The protein localises to the host Golgi apparatus. It localises to the host trans-Golgi network. Its subcellular location is the host endoplasmic reticulum. It catalyses the reaction Autocatalytic release of the core protein from the N-terminus of the togavirus structural polyprotein by hydrolysis of a -Trp-|-Ser- bond.. Functionally, forms an icosahedral capsid with a T=4 symmetry composed of 240 copies of the capsid protein surrounded by a lipid membrane through which penetrate 80 spikes composed of trimers of E1-E2 heterodimers. The capsid protein binds to the viral RNA genome at a site adjacent to a ribosome binding site for viral genome translation following genome release. Possesses a protease activity that results in its autocatalytic cleavage from the nascent structural protein. Following its self-cleavage, the capsid protein transiently associates with ribosomes, and within several minutes the protein binds to viral RNA and rapidly assembles into icosahedric core particles. The resulting nucleocapsid eventually associates with the cytoplasmic domain of the spike glycoprotein E2 at the cell membrane, leading to budding and formation of mature virions. In case of infection, new virions attach to target cells and after clathrin-mediated endocytosis their membrane fuses with the host endosomal membrane. This leads to the release of the nucleocapsid into the cytoplasm, followed by an uncoating event necessary for the genomic RNA to become accessible. The uncoating might be triggered by the interaction of capsid proteins with ribosomes. Binding of ribosomes would release the genomic RNA since the same region is genomic RNA-binding and ribosome-binding. Specifically inhibits interleukin-1 receptor-associated kinase 1/IRAK1-dependent signaling during viral entry, representing a means by which the alphaviruses may evade innate immune detection and activation prior to viral gene expression. In terms of biological role, provides the signal sequence for the translocation of the precursor of protein E3/E2 to the host endoplasmic reticulum. Furin-cleaved E3 remains associated with spike glycoprotein E1 and mediates pH protection of the latter during the transport via the secretory pathway. After virion release from the host cell, the assembly protein E3 is gradually released in the extracellular space. Its function is as follows. Plays a role in viral attachment to target host cell, by binding to the cell receptor. Synthesized as a p62 precursor which is processed by furin at the cell membrane just before virion budding, giving rise to E2-E1 heterodimer. The p62-E1 heterodimer is stable, whereas E2-E1 is unstable and dissociate at low pH. p62 is processed at the last step, presumably to avoid E1 fusion activation before its final export to cell surface. E2 C-terminus contains a transitory transmembrane that would be disrupted by palmitoylation, resulting in reorientation of the C-terminal tail from lumenal to cytoplasmic side. This step is critical since E2 C-terminus is involved in budding by interacting with capsid proteins. This release of E2 C-terminus in cytoplasm occurs lately in protein export, and precludes premature assembly of particles at the endoplasmic reticulum membrane. Acts as a viroporin that participates in virus glycoprotein processing and transport to the plasma membrane, cell permeabilization and budding of viral particles. Disrupts the calcium homeostasis of the cell, probably at the endoplasmic reticulum level. This leads to cytoplasmic calcium elevation. Because of its lipophilic properties, the 6K protein is postulated to influence the selection of lipids that interact with the transmembrane domains of the glycoproteins, which, in turn, affects the deformability of the bilayer required for the extreme curvature that occurs as budding proceeds. Present in low amount in virions, about 3% compared to viral glycoproteins. Functionally, class II viral fusion protein. Fusion activity is inactive as long as E1 is bound to E2 in mature virion. After virus attachment to target cell and endocytosis, acidification of the endosome induce dissociation of E1/E2 heterodimer and concomitant trimerization of the E1 subunits. This E1 trimer is fusion active, and promotes release of viral nucleocapsid in cytoplasm after endosome and viral membrane fusion. Efficient fusion requires the presence of cholesterol and sphingolipid in the target membrane. The chain is Structural polyprotein from Aedes (AURAV).